The primary structure comprises 301 residues: Epimerase family protein Mb2239 (301 aa).

It belongs to the NAD(P)-dependent epimerase/dehydratase family. SDR39U1 subfamily.

The polypeptide is Epimerase family protein Mb2239 (Mycobacterium bovis (strain ATCC BAA-935 / AF2122/97)).